Here is an 821-residue protein sequence, read N- to C-terminus: DNA replication licensing factor MCM6 (821 aa).

Methionine 1 is subject to N-acetylmethionine. Phosphoserine is present on residues serine 13, serine 219, and serine 271. Threonine 278 carries the post-translational modification Phosphothreonine. Residues 346-553 (LYHNLCTSLF…TDYAIARRIV (208 aa)) enclose the MCM domain. ATP is bound by residues histidine 359, serine 399, threonine 400, alanine 401, lysine 402, serine 403, and asparagine 504. The Arginine finger motif lies at 528–531 (SRFD). Positions 619 and 622 each coordinate ADP. The residue at position 643 (lysine 643) is an N6-acetyllysine. The segment at 676–708 (TDEGQGGVNGHADSPAPVNRFNGSSEDASQETV) is disordered. Phosphoserine is present on residues serine 689, serine 704, and serine 762. The span at 696–708 (FNGSSEDASQETV) shows a compositional bias: polar residues. Threonine 791 carries the post-translational modification Phosphothreonine.

It belongs to the MCM family. As to quaternary structure, component of the MCM2-7 complex. The complex forms a toroidal hexameric ring with the proposed subunit order MCM2-MCM6-MCM4-MCM7-MCM3-MCM5. Component of the CMG helicase complex, a hexameric ring of related MCM2-7 subunits stabilized by CDC45 and the tetrameric GINS complex. May interact with MCM10. Interacts with TIPIN. Interacts with CDT1. Interacts with MCMBP. Interacts with DDI2. Post-translationally, O-glycosylated (O-GlcNAcylated), in a cell cycle-dependent manner.

The protein resides in the nucleus. It is found in the chromosome. The enzyme catalyses ATP + H2O = ADP + phosphate + H(+). Its function is as follows. Acts as a component of the MCM2-7 complex (MCM complex) which is the replicative helicase essential for 'once per cell cycle' DNA replication initiation and elongation in eukaryotic cells. Core component of CDC45-MCM-GINS (CMG) helicase, the molecular machine that unwinds template DNA during replication, and around which the replisome is built. The active ATPase sites in the MCM2-7 ring are formed through the interaction surfaces of two neighboring subunits such that a critical structure of a conserved arginine finger motif is provided in trans relative to the ATP-binding site of the Walker A box of the adjacent subunit. The six ATPase active sites, however, are likely to contribute differentially to the complex helicase activity. The chain is DNA replication licensing factor MCM6 (Mcm6) from Mus musculus (Mouse).